The sequence spans 185 residues: Probable nicotinate-nucleotide adenylyltransferase (185 aa).

Belongs to the NadD family.

The catalysed reaction is nicotinate beta-D-ribonucleotide + ATP + H(+) = deamido-NAD(+) + diphosphate. It functions in the pathway cofactor biosynthesis; NAD(+) biosynthesis; deamido-NAD(+) from nicotinate D-ribonucleotide: step 1/1. Its function is as follows. Catalyzes the reversible adenylation of nicotinate mononucleotide (NaMN) to nicotinic acid adenine dinucleotide (NaAD). In Cereibacter sphaeroides (strain ATCC 17025 / ATH 2.4.3) (Rhodobacter sphaeroides), this protein is Probable nicotinate-nucleotide adenylyltransferase.